We begin with the raw amino-acid sequence, 290 residues long: Ribosomal RNA small subunit methyltransferase A (290 aa).

The S-adenosyl-L-methionine site is built by N27, L29, G54, E75, D100, and N125.

This sequence belongs to the class I-like SAM-binding methyltransferase superfamily. rRNA adenine N(6)-methyltransferase family. RsmA subfamily.

Its subcellular location is the cytoplasm. The enzyme catalyses adenosine(1518)/adenosine(1519) in 16S rRNA + 4 S-adenosyl-L-methionine = N(6)-dimethyladenosine(1518)/N(6)-dimethyladenosine(1519) in 16S rRNA + 4 S-adenosyl-L-homocysteine + 4 H(+). Its function is as follows. Specifically dimethylates two adjacent adenosines (A1518 and A1519) in the loop of a conserved hairpin near the 3'-end of 16S rRNA in the 30S particle. May play a critical role in biogenesis of 30S subunits. This chain is Ribosomal RNA small subunit methyltransferase A, found in Streptococcus sanguinis (strain SK36).